The following is a 199-amino-acid chain: MSNMEKHLFNLKFAAKELNRSSKKCDKEEKAEKAKIKKAIQKGNMEVARIHAENAIRQKNQGVNFLRMSARVDAVAARVQTAVTMGKVTKSMAGVVKSMDATLKSMNLEKISALMDKFEHQFETLDVQTQQMEDTMSSTTTLTTPQNQVDMLLQEMADEAGLDLNMELPQGQTGSVGTSVASAEQDELSQRLARLRDQV.

Residues 10-48 (NLKFAAKELNRSSKKCDKEEKAEKAKIKKAIQKGNMEVA) adopt a coiled-coil conformation. Residues 132 to 156 (MEDTMSSTTTLTTPQNQVDMLLQEM) form an interaction with IST1 region. The tract at residues 167–199 (ELPQGQTGSVGTSVASAEQDELSQRLARLRDQV) is disordered. Residues 170–182 (QGQTGSVGTSVAS) are compositionally biased toward polar residues. The interaction with SPAST stretch occupies residues 174-199 (GSVGTSVASAEQDELSQRLARLRDQV). The stretch at 178 to 199 (TSVASAEQDELSQRLARLRDQV) forms a coiled coil. An interaction with VPS4A, MITD1 and STAMBP region spans residues 180–196 (VASAEQDELSQRLARLR). The interval 180–199 (VASAEQDELSQRLARLRDQV) is interaction with VTA1. The tract at residues 183 to 199 (AEQDELSQRLARLRDQV) is interaction with VPS4B. The short motif at 186-196 (DELSQRLARLR) is the MIT-interacting motif element.

Belongs to the SNF7 family. Probable peripherally associated component of the endosomal sorting required for transport complex III (ESCRT-III). ESCRT-III components are thought to multimerize to form a flat lattice on the perimeter membrane of the endosome. Several assembly forms of ESCRT-III may exist that interact and act sequentially. Interacts with CHMP1A. Interacts with VTA1; the interaction probably involves the open conformation of CHMP1B. Interacts with CHMP2A. Interacts with VPS4A; the interaction is direct. Interacts with VPS4B; the interaction is direct. Interacts with SPAST (via MIT domain); the interaction is direct. Interacts with IST1. Interacts with MITD1. Interacts with STAMBP.

The protein localises to the cytoplasm. Its subcellular location is the cytosol. The protein resides in the endosome. It is found in the late endosome membrane. Its function is as follows. Probable peripherally associated component of the endosomal sorting required for transport complex III (ESCRT-III) which is involved in multivesicular bodies (MVBs) formation and sorting of endosomal cargo proteins into MVBs. MVBs contain intraluminal vesicles (ILVs) that are generated by invagination and scission from the limiting membrane of the endosome and mostly are delivered to lysosomes enabling degradation of membrane proteins, such as stimulated growth factor receptors, lysosomal enzymes and lipids. The MVB pathway appears to require the sequential function of ESCRT-O, -I,-II and -III complexes. ESCRT-III proteins mostly dissociate from the invaginating membrane before the ILV is released. The ESCRT machinery also functions in topologically equivalent membrane fission events, such as the terminal stages of cytokinesis. ESCRT-III proteins are believed to mediate the necessary vesicle extrusion and/or membrane fission activities, possibly in conjunction with the AAA ATPase VPS4. Involved in cytokinesis. Involved in recruiting VPS4A and/or VPS4B and SPAST to the midbody of dividing cells. The chain is Charged multivesicular body protein 1B1 from Mus musculus (Mouse).